Consider the following 266-residue polypeptide: Potassium/proton antiporter CemA (266 aa).

3 helical membrane passes run 46-66, 151-171, and 226-246; these read VIVSVRCLITLIFVPLFINIL, FLSFLSLSVVFLLLKPQIIIL, and FMSLFVATFPVFLDTVFKYWI.

The protein belongs to the CemA family.

The protein resides in the plastid. It is found in the chloroplast inner membrane. The catalysed reaction is K(+)(in) + H(+)(out) = K(+)(out) + H(+)(in). Contributes to K(+)/H(+) antiport activity by supporting proton efflux to control proton extrusion and homeostasis in chloroplasts in a light-dependent manner to modulate photosynthesis. Prevents excessive induction of non-photochemical quenching (NPQ) under continuous-light conditions. Indirectly promotes efficient inorganic carbon uptake into chloroplasts. The chain is Potassium/proton antiporter CemA from Chlorella vulgaris (Green alga).